Reading from the N-terminus, the 82-residue chain is RNA-binding protein Hfq (82 aa).

A Sm domain is found at 9–68 (DPFLNTLRKEHVPVSIYLVNGIKLQGKVDSFDQYVIMLKNTVSQMVYKHAISTIVPGRPV).

It belongs to the Hfq family. Homohexamer.

In terms of biological role, RNA chaperone that binds small regulatory RNA (sRNAs) and mRNAs to facilitate mRNA translational regulation in response to envelope stress, environmental stress and changes in metabolite concentrations. Also binds with high specificity to tRNAs. The chain is RNA-binding protein Hfq from Methylococcus capsulatus (strain ATCC 33009 / NCIMB 11132 / Bath).